A 380-amino-acid chain; its full sequence is Erythronate-4-phosphate dehydrogenase (380 aa).

Substrate contacts are provided by Ser45 and Thr66. Residues 126 to 127, Asp146, Thr174, 205 to 207, and Asp231 contribute to the NAD(+) site; these read QV and ASR. Arg207 is a catalytic residue. Glu236 is an active-site residue. Catalysis depends on His253, which acts as the Proton donor. Gly256 is a binding site for NAD(+). Tyr257 contributes to the substrate binding site.

Belongs to the D-isomer specific 2-hydroxyacid dehydrogenase family. PdxB subfamily. Homodimer.

Its subcellular location is the cytoplasm. The enzyme catalyses 4-phospho-D-erythronate + NAD(+) = (R)-3-hydroxy-2-oxo-4-phosphooxybutanoate + NADH + H(+). It participates in cofactor biosynthesis; pyridoxine 5'-phosphate biosynthesis; pyridoxine 5'-phosphate from D-erythrose 4-phosphate: step 2/5. Catalyzes the oxidation of erythronate-4-phosphate to 3-hydroxy-2-oxo-4-phosphonooxybutanoate. The chain is Erythronate-4-phosphate dehydrogenase from Pseudomonas syringae pv. tomato (strain ATCC BAA-871 / DC3000).